We begin with the raw amino-acid sequence, 315 residues long: Ferrochelatase (315 aa).

2 residues coordinate Fe cation: His193 and Glu273.

It belongs to the ferrochelatase family.

It localises to the cytoplasm. The enzyme catalyses heme b + 2 H(+) = protoporphyrin IX + Fe(2+). The protein operates within porphyrin-containing compound metabolism; protoheme biosynthesis; protoheme from protoporphyrin-IX: step 1/1. In terms of biological role, catalyzes the ferrous insertion into protoporphyrin IX. The chain is Ferrochelatase from Wolbachia sp. subsp. Drosophila simulans (strain wRi).